Consider the following 402-residue polypeptide: Major outer membrane porin (402 aa).

An N-terminal signal peptide occupies residues 1 to 22 (MKKLLKSALLFAATGSALSLQA).

The protein belongs to the chlamydial porin (CP) (TC 1.B.2) family. In terms of assembly, part of a disulfide cross-linked outer membrane complex (COMC) composed of the major outer membrane porin, the small cysteine-rich protein (OmcA) and the large cysteine-rich periplasmic protein (OmcB).

Its subcellular location is the cell outer membrane. Functionally, in elementary bodies (EBs, the infectious stage, which is able to survive outside the host cell) provides the structural integrity of the outer envelope through disulfide cross-links with the small cysteine-rich protein and the large cysteine-rich periplasmic protein. It has been described in publications as the Sarkosyl-insoluble COMC (Chlamydia outer membrane complex), and serves as the functional equivalent of peptidoglycan. Its function is as follows. Permits diffusion of specific solutes through the outer membrane. This chain is Major outer membrane porin (ompA), found in Chlamydia psittaci (Chlamydophila psittaci).